We begin with the raw amino-acid sequence, 143 residues long: Large ribosomal subunit protein uL15 (143 aa).

The interval 1 to 58 (MQLNDLRSAPGARREKHRPGRGIGSGLGKTGGRGHKGQTSRSGGSIAPGFEGGQQPLH) is disordered. Gly residues predominate over residues 21–31 (RGIGSGLGKTG).

This sequence belongs to the universal ribosomal protein uL15 family. In terms of assembly, part of the 50S ribosomal subunit.

In terms of biological role, binds to the 23S rRNA. In Ectopseudomonas mendocina (strain ymp) (Pseudomonas mendocina), this protein is Large ribosomal subunit protein uL15.